The sequence spans 368 residues: Tetraacyldisaccharide 4'-kinase (368 aa).

Position 66–73 (66–73 (TVGGTGKT)) interacts with ATP.

The protein belongs to the LpxK family.

The catalysed reaction is a lipid A disaccharide + ATP = a lipid IVA + ADP + H(+). Its pathway is glycolipid biosynthesis; lipid IV(A) biosynthesis; lipid IV(A) from (3R)-3-hydroxytetradecanoyl-[acyl-carrier-protein] and UDP-N-acetyl-alpha-D-glucosamine: step 6/6. Transfers the gamma-phosphate of ATP to the 4'-position of a tetraacyldisaccharide 1-phosphate intermediate (termed DS-1-P) to form tetraacyldisaccharide 1,4'-bis-phosphate (lipid IVA). The chain is Tetraacyldisaccharide 4'-kinase from Desulfatibacillum aliphaticivorans.